Reading from the N-terminus, the 593-residue chain is UvrABC system protein C (593 aa).

Residues 17 to 94 (MEPGCYLMKD…IKQYQPRYNI (78 aa)) enclose the GIY-YIG domain. The 36-residue stretch at 199 to 234 (KTILKSLEERMLTASESLDFERAKEYRDLIQHIQNL) folds into the UVR domain.

Belongs to the UvrC family. Interacts with UvrB in an incision complex.

It is found in the cytoplasm. Functionally, the UvrABC repair system catalyzes the recognition and processing of DNA lesions. UvrC both incises the 5' and 3' sides of the lesion. The N-terminal half is responsible for the 3' incision and the C-terminal half is responsible for the 5' incision. In Staphylococcus aureus (strain MSSA476), this protein is UvrABC system protein C.